A 328-amino-acid chain; its full sequence is Gonadotropin-releasing hormone receptor (328 aa).

At 1–38 the chain is on the extracellular side; it reads MANRAYLEQKQTQCSIINSSFSMTHRDLPTLTLSGKIR. N-linked (GlcNAc...) asparagine glycosylation is present at asparagine 18. The helical transmembrane segment at 39–58 threads the bilayer; that stretch reads VMVTFFLFLVSTAFNASFLM. Topologically, residues 59 to 77 are cytoplasmic; that stretch reads KLQRQTQKKEEVKKLTRMK. The helical transmembrane segment at 78-97 threads the bilayer; the sequence is VLLKHLTLANLLETVIVMPL. The Extracellular segment spans residues 98–115; sequence DGIWNVTVQWYAGEFLCK. The N-linked (GlcNAc...) asparagine glycan is linked to asparagine 102. An intrachain disulfide couples cysteine 114 to cysteine 196. Residues 116–137 form a helical membrane-spanning segment; the sequence is ALSYLKLFSMYAPAFMMVVISL. At 138 to 164 the chain is on the cytoplasmic side; it reads DRFLAITRPLAVKSNTKVGQSLIAVAW. Residues 165-184 form a helical membrane-spanning segment; the sequence is FLSIVLAGPQLYIFRMIYVE. Residues 185–212 lie on the Extracellular side of the membrane; it reads DISGQTGNFSQCVTHCSFPEWWQEAFYN. Residue asparagine 192 is glycosylated (N-linked (GlcNAc...) asparagine). Residues 213 to 232 form a helical membrane-spanning segment; sequence LLTFSCLFIGPLLIMLVCNA. Topologically, residues 233 to 281 are cytoplasmic; that stretch reads KIIFTLTQVLHQDPHELQLNRSKNNIPRARLRTLKMTVAFATLFTICWT. A helical transmembrane segment spans residues 282 to 300; that stretch reads PYYVLGIWYWFDPEMLNRV. Residues 301–306 lie on the Extracellular side of the membrane; it reads SDPVNH. Residues 307 to 326 form a helical membrane-spanning segment; that stretch reads FFFLFGLLNPCFDPLIYGYF. At 327–328 the chain is on the cytoplasmic side; that stretch reads SL.

It belongs to the G-protein coupled receptor 1 family.

The protein resides in the cell membrane. Receptor for gonadotropin releasing hormone (GnRH) that mediates the action of GnRH to stimulate the secretion of the gonadotropic hormones luteinizing hormone (LH) and follicle-stimulating hormone (FSH). This receptor mediates its action by association with G-proteins that activate a phosphatidylinositol-calcium second messenger system. In Trichosurus vulpecula (Brush-tailed possum), this protein is Gonadotropin-releasing hormone receptor (GNRHR).